The primary structure comprises 363 residues: Forkhead box protein I1 (363 aa).

The segment covering 1-18 (MNPVQQPAQQRSPASSLP) has biased composition (low complexity). 3 disordered regions span residues 1-24 (MNPV…KRAQ), 210-269 (DNGN…SPPA), and 344-363 (TTAQ…QGRY). The segment at residues 125–219 (RPPYSYSALI…DNGNFRRKRK (95 aa)) is a DNA-binding region (fork-head). The span at 231 to 243 (KIGEDHLNPKGKE) shows a compositional bias: basic and acidic residues. Low complexity-rich tracts occupy residues 244 to 258 (SPPM…EPSP) and 347 to 363 (QKQP…QGRY).

It localises to the nucleus. Transcription factor. Essential for ventral specification of the early cephalic (head) ectoderm during gastrulation, playing a role in the 'non-neural' versus 'neural' cell fate choice. Binds to DNA via the target sequence 5'-[AG]TAAA[CT]A-3', with 5'-ATAAACA-3' being the preferred binding site. This Xenopus tropicalis (Western clawed frog) protein is Forkhead box protein I1.